The sequence spans 937 residues: Isoleucine--tRNA ligase (937 aa).

Positions 58-68 match the 'HIGH' region motif; sequence PYANGNIHIGH. Glu-560 lines the L-isoleucyl-5'-AMP pocket. The 'KMSKS' region motif lies at 601 to 605; it reads KMSKS. Lys-604 contributes to the ATP binding site. Zn(2+) is bound by residues Cys-900, Cys-903, Cys-920, and Cys-923.

This sequence belongs to the class-I aminoacyl-tRNA synthetase family. IleS type 1 subfamily. Monomer. It depends on Zn(2+) as a cofactor.

The protein resides in the cytoplasm. The catalysed reaction is tRNA(Ile) + L-isoleucine + ATP = L-isoleucyl-tRNA(Ile) + AMP + diphosphate. Catalyzes the attachment of isoleucine to tRNA(Ile). As IleRS can inadvertently accommodate and process structurally similar amino acids such as valine, to avoid such errors it has two additional distinct tRNA(Ile)-dependent editing activities. One activity is designated as 'pretransfer' editing and involves the hydrolysis of activated Val-AMP. The other activity is designated 'posttransfer' editing and involves deacylation of mischarged Val-tRNA(Ile). The chain is Isoleucine--tRNA ligase from Thioalkalivibrio sulfidiphilus (strain HL-EbGR7).